The primary structure comprises 1274 residues: Mediator of RNA polymerase II transcription subunit 14 (1274 aa).

Disordered regions lie at residues 1–40 (MENGHMNGVRTHHDRNSWTNGVNGGVAKREGSPDKGKAHA), 1056–1142 (LVGT…LHTQ), and 1155–1274 (AQRQ…VVID). Residues 27–37 (AKREGSPDKGK) show a composition bias toward basic and acidic residues. The span at 1075–1085 (QDLQQGPQKTP) shows a compositional bias: polar residues. Positions 1090–1104 (AAQAAQAAQAAQAAQ) are enriched in low complexity. The span at 1108-1119 (PQRPKQQPPTPS) shows a compositional bias: pro residues. 3 stretches are compositionally biased toward low complexity: residues 1120 to 1142 (QPQQQHRNVNQPQAQAQPQLHTQ), 1155 to 1172 (AQRQAQARANNSSNNNNT), and 1183 to 1252 (PQQR…PQGQ). A compositionally biased stretch (gly residues) spans 1253–1265 (PGHGGGANGGMGG).

Belongs to the Mediator complex subunit 14 family. As to quaternary structure, component of the Mediator complex.

Its subcellular location is the nucleus. In terms of biological role, component of the Mediator complex, a coactivator involved in the regulated transcription of nearly all RNA polymerase II-dependent genes. Mediator functions as a bridge to convey information from gene-specific regulatory proteins to the basal RNA polymerase II transcription machinery. Mediator is recruited to promoters by direct interactions with regulatory proteins and serves as a scaffold for the assembly of a functional preinitiation complex with RNA polymerase II and the general transcription factors. The protein is Mediator of RNA polymerase II transcription subunit 14 (rgr1) of Neurospora crassa (strain ATCC 24698 / 74-OR23-1A / CBS 708.71 / DSM 1257 / FGSC 987).